The chain runs to 282 residues: HTH-type transcriptional activator RhaR (282 aa).

Residues 179 to 277 (DKLITALANS…GMTPSQWRHL (99 aa)) form the HTH araC/xylS-type domain. 2 DNA-binding regions (H-T-H motif) span residues 196–217 (DAFC…RAQT) and 244–267 (VSEI…TRET).

Binds DNA as a dimer.

It is found in the cytoplasm. In terms of biological role, activates expression of the rhaSR operon in response to L-rhamnose. The protein is HTH-type transcriptional activator RhaR of Salmonella typhi.